A 765-amino-acid polypeptide reads, in one-letter code: Leucine-rich repeat and calponin homology domain-containing protein 2 (765 aa).

2 disordered regions span residues 1–39 (MAAS…GGGG) and 55–76 (LFGQ…PQHT). LRR repeat units lie at residues 89 to 110 (SSGI…GYDL), 112 to 133 (DTTQ…VWLF), 135 to 156 (PLET…IKNL), 158 to 179 (MLTY…LFDL), 180 to 201 (PLKV…IGKL), 203 to 224 (DLME…MGKL), 226 to 248 (SLRE…GDLP), 249 to 269 (LVKL…YRKL), and 271 to 292 (HLQV…ICLK). The tract at residues 316–401 (LDLPSLSKRM…GSKTDSQKDQ (86 aa)) is disordered. Basic and acidic residues predominate over residues 378–388 (SNREQTSRNDS). The stretch at 438 to 472 (SEKSRKNEELGDEKRLEKEQLLAEEEDDDLKEVTD) forms a coiled coil. Disordered regions lie at residues 498 to 552 (RNKP…QSEE) and 565 to 628 (KYKS…EYGA). Residues 503–512 (QTVECEKSVS) show a composition bias toward basic and acidic residues. Polar residues-rich tracts occupy residues 518–529 (SPLSPLTWQPLE) and 584–595 (DNANMSTQSPVS). Positions 642-755 (LREEREQIRQ…VTVQALLELP (114 aa)) constitute a Calponin-homology (CH) domain.

Functionally, may play a role in the organization of the cytoskeleton. The sequence is that of Leucine-rich repeat and calponin homology domain-containing protein 2 (LRCH2) from Homo sapiens (Human).